We begin with the raw amino-acid sequence, 84 residues long: MKFLDFFRANKKPSTASVAKERLQIIVAHERGQRSTPDYLPALQKELVEVIRKYVNIGNDDVHVALENDGSCSILELNITLPDR.

This sequence belongs to the MinE family.

Functionally, prevents the cell division inhibition by proteins MinC and MinD at internal division sites while permitting inhibition at polar sites. This ensures cell division at the proper site by restricting the formation of a division septum at the midpoint of the long axis of the cell. The sequence is that of Cell division topological specificity factor from Pseudomonas fluorescens (strain SBW25).